We begin with the raw amino-acid sequence, 375 residues long: 1-deoxy-D-xylulose 5-phosphate reductoisomerase (375 aa).

Residues Thr-10, Gly-11, Ser-12, Val-13, Lys-37, and Asn-114 each coordinate NADPH. 1-deoxy-D-xylulose 5-phosphate is bound at residue Lys-115. Glu-116 lines the NADPH pocket. Asp-136 provides a ligand contact to Mn(2+). 1-deoxy-D-xylulose 5-phosphate is bound by residues Ser-137, Glu-138, Ser-162, and His-185. Glu-138 is a binding site for Mn(2+). Position 191 (Gly-191) interacts with NADPH. Positions 198, 203, 204, and 207 each coordinate 1-deoxy-D-xylulose 5-phosphate. Glu-207 contacts Mn(2+).

Belongs to the DXR family. The cofactor is Mg(2+). Mn(2+) is required as a cofactor.

It carries out the reaction 2-C-methyl-D-erythritol 4-phosphate + NADP(+) = 1-deoxy-D-xylulose 5-phosphate + NADPH + H(+). It participates in isoprenoid biosynthesis; isopentenyl diphosphate biosynthesis via DXP pathway; isopentenyl diphosphate from 1-deoxy-D-xylulose 5-phosphate: step 1/6. Catalyzes the NADPH-dependent rearrangement and reduction of 1-deoxy-D-xylulose-5-phosphate (DXP) to 2-C-methyl-D-erythritol 4-phosphate (MEP). The protein is 1-deoxy-D-xylulose 5-phosphate reductoisomerase of Sulfurihydrogenibium sp. (strain YO3AOP1).